Consider the following 113-residue polypeptide: Ribonuclease P protein component (113 aa).

Belongs to the RnpA family. As to quaternary structure, consists of a catalytic RNA component (M1 or rnpB) and a protein subunit.

It catalyses the reaction Endonucleolytic cleavage of RNA, removing 5'-extranucleotides from tRNA precursor.. In terms of biological role, RNaseP catalyzes the removal of the 5'-leader sequence from pre-tRNA to produce the mature 5'-terminus. It can also cleave other RNA substrates such as 4.5S RNA. The protein component plays an auxiliary but essential role in vivo by binding to the 5'-leader sequence and broadening the substrate specificity of the ribozyme. The protein is Ribonuclease P protein component of Vesicomyosocius okutanii subsp. Calyptogena okutanii (strain HA).